The chain runs to 468 residues: Secreted triacylglycerol lipase LIP7 (468 aa).

An N-terminal signal peptide occupies residues Met-1–Gly-21. Residues Cys-125 and Cys-295 are joined by a disulfide bond. Ser-209 functions as the Nucleophile in the catalytic mechanism. Catalysis depends on residues Asp-355 and His-389.

Belongs to the AB hydrolase superfamily. Lipase family. Class Lip subfamily.

The protein resides in the secreted. The protein localises to the cell wall. It catalyses the reaction a triacylglycerol + H2O = a diacylglycerol + a fatty acid + H(+). The enzyme catalyses a monoacylglycerol + H2O = glycerol + a fatty acid + H(+). It carries out the reaction a diacylglycerol + H2O = a monoacylglycerol + a fatty acid + H(+). In terms of biological role, secreted lipase involved in Dandruff and seborrheic dermatitis (D/SD) probably via lipase-mediated breakdown of sebaceous lipids and release of irritating free fatty acids. Has triacylglycerol lipase activity and is able to hydrolyze triolein. Mostly converts monoolein to di- and triolein, while free fatty acids are only produced in low amounts. This Malassezia globosa (strain ATCC MYA-4612 / CBS 7966) (Dandruff-associated fungus) protein is Secreted triacylglycerol lipase LIP7.